The sequence spans 254 residues: Precorrin-3B C(17)-methyltransferase (254 aa).

It belongs to the precorrin methyltransferase family.

It carries out the reaction precorrin-3B + S-adenosyl-L-methionine = precorrin-4 + S-adenosyl-L-homocysteine + 3 H(+). The protein operates within cofactor biosynthesis; adenosylcobalamin biosynthesis; cob(II)yrinate a,c-diamide from precorrin-2 (aerobic route): step 3/10. Its function is as follows. Methyltransferase that catalyzes the methylation of C-17 in precorrin-3B to form precorrin-4. The polypeptide is Precorrin-3B C(17)-methyltransferase (cobJ) (Sinorhizobium sp).